The following is a 237-amino-acid chain: DNA repair protein RecO (237 aa).

This sequence belongs to the RecO family.

In terms of biological role, involved in DNA repair and RecF pathway recombination. The polypeptide is DNA repair protein RecO (Rickettsia peacockii (strain Rustic)).